Here is a 295-residue protein sequence, read N- to C-terminus: Glutamyl-Q tRNA(Asp) synthetase (295 aa).

L-glutamate contacts are provided by residues 5–9 and glutamate 41; that span reads RFAPS. The 'HIGH' region signature appears at 8–18; it reads PSPTGLLHIGS. The Zn(2+) site is built by cysteine 97, cysteine 99, tyrosine 117, and cysteine 121. Residues tyrosine 178 and arginine 196 each contribute to the L-glutamate site. Positions 234 to 238 match the 'KMSKS' region motif; that stretch reads KWSKQ. Lysine 237 contributes to the ATP binding site.

It belongs to the class-I aminoacyl-tRNA synthetase family. GluQ subfamily. Zn(2+) serves as cofactor.

Functionally, catalyzes the tRNA-independent activation of glutamate in presence of ATP and the subsequent transfer of glutamate onto a tRNA(Asp). Glutamate is transferred on the 2-amino-5-(4,5-dihydroxy-2-cyclopenten-1-yl) moiety of the queuosine in the wobble position of the QUC anticodon. The polypeptide is Glutamyl-Q tRNA(Asp) synthetase (Neisseria gonorrhoeae (strain ATCC 700825 / FA 1090)).